The following is a 276-amino-acid chain: MPIVKAKPTSPGRRFVEKVVHPHLYKGRPHAPLVEAQGRSGGRNNNGRITSRHIGGGHKQHYRIIDFKRTKDNIPATVERIEYDPNRTAHIALLKYADGERRYIIAPKKLKVGDTVLSGEASPIRPGNCLPLKNIPVGTTISNIELKIGKGAQMARSAGASVQLLGKEGIYAILRLRSGETRRVHVNCRAVIGEVSNTENNLKSLGKAGASRWRGVRPTVRGTAMNPVDHPHGGGEGRTMGKHPTTPWGQKTKGLKTRSNKRTDSMIIRRRRAKKK.

Disordered regions lie at residues Leu-33–Gly-55 and Arg-221–Lys-276.

The protein belongs to the universal ribosomal protein uL2 family. In terms of assembly, part of the 50S ribosomal subunit. Forms a bridge to the 30S subunit in the 70S ribosome.

Functionally, one of the primary rRNA binding proteins. Required for association of the 30S and 50S subunits to form the 70S ribosome, for tRNA binding and peptide bond formation. It has been suggested to have peptidyltransferase activity; this is somewhat controversial. Makes several contacts with the 16S rRNA in the 70S ribosome. The sequence is that of Large ribosomal subunit protein uL2 from Psychrobacter sp. (strain PRwf-1).